The primary structure comprises 429 residues: MKKQRNLRSMAAQAVEQVVEQGQSLSNILPPLQQKVSDKDKALLQELCFGVLRTLSQLDWLINKLMARPMTGKQRTVHYLIMVGLYQLLYTRIPPHAALAETVEGAIAIKRPQLKGLINGVLRQFQRQQEELLAEFNASDARYLHPSWLLKRLQKAYPEQWQSIVEANNQRPPMWLRVNRTHHSRDSWLALLDEAGMKGFPHADYPDAVRLETPAPVHALPGFEDGWVTVQDASAQGCMTWLAPQNGEHILDLCAAPGGKTTHILEVAPEAQVVAVDIDEQRLSRVYDNLKRLGMKATVKQGDGRYPSQWCGEQQFDRILLDAPCSATGVIRRHPDIKWLRRDRDIPELAQLQSEILDAIWPHLKSGGTLVYATCSVLPEENSLQIKAFLQRTADAELCETGTPEQPGKQNLPGAEEGDGFFYAKLIKK.

S-adenosyl-L-methionine contacts are provided by residues Cys254 to Lys260, Asp277, Asp303, and Asp322. Cys375 serves as the catalytic Nucleophile.

It belongs to the class I-like SAM-binding methyltransferase superfamily. RsmB/NOP family.

Its subcellular location is the cytoplasm. It carries out the reaction cytidine(967) in 16S rRNA + S-adenosyl-L-methionine = 5-methylcytidine(967) in 16S rRNA + S-adenosyl-L-homocysteine + H(+). Its function is as follows. Specifically methylates the cytosine at position 967 (m5C967) of 16S rRNA. This is Ribosomal RNA small subunit methyltransferase B from Escherichia coli (strain SE11).